Consider the following 126-residue polypeptide: Large ribosomal subunit protein bL19 (126 aa).

It belongs to the bacterial ribosomal protein bL19 family.

This protein is located at the 30S-50S ribosomal subunit interface and may play a role in the structure and function of the aminoacyl-tRNA binding site. The sequence is that of Large ribosomal subunit protein bL19 from Prochlorococcus marinus (strain MIT 9312).